We begin with the raw amino-acid sequence, 247 residues long: uncharacterized protein (247 aa).

Helical transmembrane passes span 19–39 (IFFT…SIMF), 73–93 (FFTS…AFFI), 106–126 (FLSF…YFII), 155–175 (YIQF…CPLF), 196–216 (YIYF…ILSQ), and 217–237 (FFLF…SCFY).

Belongs to the TatC family.

It is found in the mitochondrion membrane. This is an uncharacterized protein from Nephroselmis olivacea (Green alga).